The following is a 67-amino-acid chain: Neurotoxin Cex9 (67 aa).

Positions 1–65 (KDGYPVEVTG…TWPLPNKSCG (65 aa)) constitute an LCN-type CS-alpha/beta domain. Cystine bridges form between C11–C64, C15–C40, C24–C45, and C28–C47. C64 carries the cysteine amide modification. Residues 65–67 (GKK) constitute a propeptide that is removed on maturation.

This sequence belongs to the long (4 C-C) scorpion toxin superfamily. Sodium channel inhibitor family. Beta subfamily. In terms of tissue distribution, expressed by the venom gland.

It is found in the secreted. Its function is as follows. Beta toxins bind voltage-independently at site-4 of sodium channels (Nav) and shift the voltage of activation toward more negative potentials thereby affecting sodium channel activation and promoting spontaneous and repetitive firing. The protein is Neurotoxin Cex9 of Centruroides exilicauda (Bark scorpion).